We begin with the raw amino-acid sequence, 275 residues long: MKIELAESYGFCFGVKRAIKIAEDNKNSSTYGPLIHNSKEIERLEKDFKVGLTDDHKSFASGDKAVIRTHGIPKNELAELKANNVDVVDATCPYVTKPQQICQEMSEQGYEIIIFGDDAHPEIKGVKSYATYGARVVTMPSELEDLKLKDRIALVAQTTRKVEDYLEIANYLIPRYKEVRVFNTICNATFENQEAVRKISKKADIMIIIGGKNSSNTKQLFSISEDNCTDSYHIEDENDLDFSWFKEKKFCGISAGASTPDWIIQNVVNAIQNSI.

Position 12 (cysteine 12) interacts with [4Fe-4S] cluster. (2E)-4-hydroxy-3-methylbut-2-enyl diphosphate contacts are provided by histidine 36 and histidine 70. Positions 36 and 70 each coordinate dimethylallyl diphosphate. Histidine 36 and histidine 70 together coordinate isopentenyl diphosphate. Cysteine 92 is a [4Fe-4S] cluster binding site. (2E)-4-hydroxy-3-methylbut-2-enyl diphosphate is bound at residue histidine 120. Histidine 120 serves as a coordination point for dimethylallyl diphosphate. Position 120 (histidine 120) interacts with isopentenyl diphosphate. Catalysis depends on glutamate 122, which acts as the Proton donor. Threonine 158 serves as a coordination point for (2E)-4-hydroxy-3-methylbut-2-enyl diphosphate. Cysteine 186 lines the [4Fe-4S] cluster pocket. 4 residues coordinate (2E)-4-hydroxy-3-methylbut-2-enyl diphosphate: serine 214, serine 215, asparagine 216, and serine 258. Residues serine 214, serine 215, asparagine 216, and serine 258 each contribute to the dimethylallyl diphosphate site. Isopentenyl diphosphate contacts are provided by serine 214, serine 215, asparagine 216, and serine 258.

It belongs to the IspH family. It depends on [4Fe-4S] cluster as a cofactor.

It catalyses the reaction isopentenyl diphosphate + 2 oxidized [2Fe-2S]-[ferredoxin] + H2O = (2E)-4-hydroxy-3-methylbut-2-enyl diphosphate + 2 reduced [2Fe-2S]-[ferredoxin] + 2 H(+). It carries out the reaction dimethylallyl diphosphate + 2 oxidized [2Fe-2S]-[ferredoxin] + H2O = (2E)-4-hydroxy-3-methylbut-2-enyl diphosphate + 2 reduced [2Fe-2S]-[ferredoxin] + 2 H(+). The protein operates within isoprenoid biosynthesis; dimethylallyl diphosphate biosynthesis; dimethylallyl diphosphate from (2E)-4-hydroxy-3-methylbutenyl diphosphate: step 1/1. Its pathway is isoprenoid biosynthesis; isopentenyl diphosphate biosynthesis via DXP pathway; isopentenyl diphosphate from 1-deoxy-D-xylulose 5-phosphate: step 6/6. In terms of biological role, catalyzes the conversion of 1-hydroxy-2-methyl-2-(E)-butenyl 4-diphosphate (HMBPP) into a mixture of isopentenyl diphosphate (IPP) and dimethylallyl diphosphate (DMAPP). Acts in the terminal step of the DOXP/MEP pathway for isoprenoid precursor biosynthesis. This chain is 4-hydroxy-3-methylbut-2-enyl diphosphate reductase, found in Sulfurimonas denitrificans (strain ATCC 33889 / DSM 1251) (Thiomicrospira denitrificans (strain ATCC 33889 / DSM 1251)).